Consider the following 178-residue polypeptide: Caveolin-1 (178 aa).

Residue serine 2 is modified to N-acetylserine. Serine 2 carries the phosphoserine modification. The interval 2 to 94 is required for homooligomerization; the sequence is SGGKYVDSEG…WKASFTTFTV (93 aa). Over 2–104 the chain is Cytoplasmic; the sequence is SGGKYVDSEG…TKYWFYRLLS (103 aa). Lysine 5 carries the N6-acetyllysine; alternate modification. Lysine 5 is covalently cross-linked (Glycyl lysine isopeptide (Lys-Gly) (interchain with G-Cter in ubiquitin); alternate). Tyrosine 6 carries the phosphotyrosine modification. Serine 9 carries the post-translational modification Phosphoserine. Position 14 is a phosphotyrosine; by ABL1 (tyrosine 14). Residue tyrosine 25 is modified to Phosphotyrosine. Residues lysine 26, lysine 39, lysine 47, and lysine 57 each participate in a glycyl lysine isopeptide (Lys-Gly) (interchain with G-Cter in ubiquitin) cross-link. An interaction with CAVIN3 region spans residues 82–94; the sequence is DGIWKASFTTFTV. An intramembrane region (helical) is located at residues 105-125; it reads ALFGIPMALIWGIYFAILSFL. Topologically, residues 126–178 are cytoplasmic; the sequence is HIWAVVPCIKSFLIEIQCISRVYSIYVHTFCDPLFEAIGKIFSSIRINMQKEI. The tract at residues 131 to 142 is interacts with SPRY1, SPRY2, SPRY3 and SPRY4; the sequence is VPCIKSFLIEIQ. S-palmitoyl cysteine attachment occurs at residues cysteine 133, cysteine 143, and cysteine 156. The interval 149–160 is interacts with SPRY1, SPRY2, and SPRY4; the sequence is SIYVHTFCDPLF. The interacts with SPRY1, SPRY2, SPRY3 and SPRY4 stretch occupies residues 167 to 178; it reads FSSIRINMQKEI.

The protein belongs to the caveolin family. In terms of assembly, homooligomer. Interacts with GLIPR2. Interacts with NOSTRIN. Interacts with SNAP25 and STX1A. Interacts (via the N-terminus) with DPP4; the interaction is direct. Interacts with CTNNB1, CDH1 and JUP. Interacts with PACSIN2; this interaction induces membrane tubulation. Interacts with SLC7A9. Interacts with BMX and BTK. Interacts with TGFBR1. Interacts with CAVIN3 (via leucine-zipper domain) in a cholesterol-sensitive manner. Interacts with CAVIN1. Interacts with EHD2 in a cholesterol-dependent manner. Forms a ternary complex with UBXN6 and VCP; mediates CAV1 targeting to lysosomes for degradation. Interacts with ABCG1; this interaction regulates ABCG1-mediated cholesterol efflux. Interacts with NEU3; this interaction enhances NEU3 sialidase activity within caveola. Interacts (via C-terminus) with SPRY1, SPRY2 (via C-terminus), SPRY3, and SPRY4. Interacts with IGFBP5; this interaction allows trafficking of IGFBP5 from the plasma membrane to the nucleus. In terms of processing, phosphorylated at Tyr-14 by ABL1 in response to oxidative stress. Post-translationally, ubiquitinated. Undergo monoubiquitination and multi- and/or polyubiquitination. Monoubiquitination of N-terminal lysines promotes integration in a ternary complex with UBXN6 and VCP which promotes oligomeric CAV1 targeting to lysosomes for degradation. Ubiquitinated by ZNRF1; leading to degradation and modulation of the TLR4-mediated immune response.

It localises to the golgi apparatus membrane. The protein resides in the cell membrane. The protein localises to the membrane. It is found in the caveola. Its subcellular location is the membrane raft. Functionally, may act as a scaffolding protein within caveolar membranes. Forms a stable heterooligomeric complex with CAV2 that targets to lipid rafts and drives caveolae formation. Mediates the recruitment of CAVIN proteins (CAVIN1/2/3/4) to the caveolae. Interacts directly with G-protein alpha subunits and can functionally regulate their activity. Involved in the costimulatory signal essential for T-cell receptor (TCR)-mediated T-cell activation. Its binding to DPP4 induces T-cell proliferation and NF-kappa-B activation in a T-cell receptor/CD3-dependent manner. Recruits CTNNB1 to caveolar membranes and may regulate CTNNB1-mediated signaling through the Wnt pathway. Negatively regulates TGFB1-mediated activation of SMAD2/3 by mediating the internalization of TGFBR1 from membrane rafts leading to its subsequent degradation. Binds 20(S)-hydroxycholesterol (20(S)-OHC). The protein is Caveolin-1 (CAV1) of Loxodonta africana (African elephant).